We begin with the raw amino-acid sequence, 173 residues long: Ribulose bisphosphate carboxylase small subunit, chloroplastic 2 (173 aa).

The N-terminal 33 residues, 1–33, are a transit peptide targeting the chloroplast; that stretch reads VVLSKECAKPLATPKVTLNKRGFATTIATKNRE.

Belongs to the RuBisCO small chain family. Heterohexadecamer of 8 large and 8 small subunits.

The protein localises to the plastid. Its subcellular location is the chloroplast. Functionally, ruBisCO catalyzes two reactions: the carboxylation of D-ribulose 1,5-bisphosphate, the primary event in carbon dioxide fixation, as well as the oxidative fragmentation of the pentose substrate. Both reactions occur simultaneously and in competition at the same active site. Although the small subunit is not catalytic it is essential for maximal activity. This is Ribulose bisphosphate carboxylase small subunit, chloroplastic 2 from Acetabularia acetabulum (Mermaid's wine glass).